The following is a 296-amino-acid chain: uncharacterized protein (296 aa).

The next 2 membrane-spanning stretches (helical) occupy residues 82–102 (VVAPLPVVIHAGAMSILWSVQ) and 117–137 (ISVLALVLLGSLGIGVLSAIF).

It is found in the cell membrane. This is an uncharacterized protein from Sinorhizobium fredii (strain NBRC 101917 / NGR234).